A 328-amino-acid chain; its full sequence is Malate dehydrogenase (328 aa).

16-22 (GAAGQIS) serves as a coordination point for NAD(+). Residues R97 and R103 each contribute to the substrate site. NAD(+) is bound by residues N110, Q117, and 134-136 (VGN). Residues N136 and R167 each contribute to the substrate site. The Proton acceptor role is filled by H192.

It belongs to the LDH/MDH superfamily. MDH type 2 family.

The catalysed reaction is (S)-malate + NAD(+) = oxaloacetate + NADH + H(+). Its function is as follows. Catalyzes the reversible oxidation of malate to oxaloacetate. The polypeptide is Malate dehydrogenase (Corynebacterium glutamicum (strain R)).